Reading from the N-terminus, the 319-residue chain is Acetyl-coenzyme A carboxylase carboxyl transferase subunit alpha (319 aa).

Residues 32-293 (NVDTEVRALE…KAVLLNELEA (262 aa)) form the CoA carboxyltransferase C-terminal domain.

The protein belongs to the AccA family. As to quaternary structure, acetyl-CoA carboxylase is a heterohexamer composed of biotin carboxyl carrier protein (AccB), biotin carboxylase (AccC) and two subunits each of ACCase subunit alpha (AccA) and ACCase subunit beta (AccD).

The protein localises to the cytoplasm. It catalyses the reaction N(6)-carboxybiotinyl-L-lysyl-[protein] + acetyl-CoA = N(6)-biotinyl-L-lysyl-[protein] + malonyl-CoA. It functions in the pathway lipid metabolism; malonyl-CoA biosynthesis; malonyl-CoA from acetyl-CoA: step 1/1. Its function is as follows. Component of the acetyl coenzyme A carboxylase (ACC) complex. First, biotin carboxylase catalyzes the carboxylation of biotin on its carrier protein (BCCP) and then the CO(2) group is transferred by the carboxyltransferase to acetyl-CoA to form malonyl-CoA. This Xylella fastidiosa (strain 9a5c) protein is Acetyl-coenzyme A carboxylase carboxyl transferase subunit alpha.